The chain runs to 196 residues: ATP-dependent Clp protease proteolytic subunit (196 aa).

Ser-96 serves as the catalytic Nucleophile. His-121 is an active-site residue.

Belongs to the peptidase S14 family. Fourteen ClpP subunits assemble into 2 heptameric rings which stack back to back to give a disk-like structure with a central cavity, resembling the structure of eukaryotic proteasomes.

It is found in the cytoplasm. The catalysed reaction is Hydrolysis of proteins to small peptides in the presence of ATP and magnesium. alpha-casein is the usual test substrate. In the absence of ATP, only oligopeptides shorter than five residues are hydrolyzed (such as succinyl-Leu-Tyr-|-NHMec, and Leu-Tyr-Leu-|-Tyr-Trp, in which cleavage of the -Tyr-|-Leu- and -Tyr-|-Trp bonds also occurs).. Cleaves peptides in various proteins in a process that requires ATP hydrolysis. Has a chymotrypsin-like activity. Plays a major role in the degradation of misfolded proteins. This Streptococcus uberis (strain ATCC BAA-854 / 0140J) protein is ATP-dependent Clp protease proteolytic subunit.